We begin with the raw amino-acid sequence, 619 residues long: MPIRQLPEILINQIAAGEVVERPASVVKELVENAIDAGATRVDIELEAAGVRLIRIRDNGHGMAAQELPLAVLRHATSKIASLDDLEAVATLGFRGEALPSIASVSRFTLMSRRATDEHGAVLQIEGGTLGEVIPHAHAPGTTVEVRELFYNVPARRKFLRAERTELGHIEEWARSLALAHPDLELRLSHNGKLSRRYKPGDWYSDVRLIEILGEDFAHQALRVDHSGAGLRLHGCIVQPHYSRLNADQQYLYVNGRPVRDRSVAHAVKQAYSDVLYQGRHPAYVLFLELDPARVDVNVHPAKHEVRFRDARLIHDFVYRTVQGTLAQTRAGTPPLAVGVGDVEGEGARPPGRHAVSFSGRRGGASHVLGSYSASTAPLMQGVPSVSVADAPAAYAALYAAPPTQVMDAVPQMQTGLPLAAGAGDVPLLGYAIAQLHGIYILAECADGLIVVDMHAAHERIGYERLKRAHDGIGLRTQPLLVPMTLMVAEREADVAECEAETLANLGFEVTRSGPGSLQVRSIPALLSQAEPEMLLRDVLSDLSEHGHTRRVAEARDTLLATMACHGAVRAHRRLSISEMNALLRDMEATERSGQCNHGRPTWARFSLAEIDRWFLRGR.

It belongs to the DNA mismatch repair MutL/HexB family.

This protein is involved in the repair of mismatches in DNA. It is required for dam-dependent methyl-directed DNA mismatch repair. May act as a 'molecular matchmaker', a protein that promotes the formation of a stable complex between two or more DNA-binding proteins in an ATP-dependent manner without itself being part of a final effector complex. This is DNA mismatch repair protein MutL from Xylella fastidiosa (strain M23).